Reading from the N-terminus, the 397-residue chain is MSAQVILQPSRDKSLRRKHPWVFESAVAELKGRARIGDTVDVFDDEGDWLGRGAYSPHSKIRVRMWTFKKDESIDNGFFLRRLETALALRKRLFDPNKTNAFRWIASESDGLPGVTIDLYDNVAVVQLLSAGGEKHRDKIVWAITKLMPDVHVYERSDVDVRKKEGLEPVTGVLHGQPPTQVTVKENGINIVVDIESGHKTGFYLDQRDSRAAAAHYAKDADVLNCFSYTGTFSCYALSGGAKSVTNVDVSQPALDLAKHHVAINGFDDKRTQYLNKDVFKALREYHEQNKQFDMVILDPPKFVDNKASLNRAARGYKDINMYGIHAVKSGGLLLTFSCSGLMPADLFQKVVADAALDAGRTIKIIARLNQASDHPIIGSYPEGYYLKGLVCEVTDD.

The PUA domain maps to 2–81 (SAQVILQPSR…ESIDNGFFLR (80 aa)).

This sequence belongs to the methyltransferase superfamily. RlmI family.

The protein resides in the cytoplasm. The enzyme catalyses cytidine(1962) in 23S rRNA + S-adenosyl-L-methionine = 5-methylcytidine(1962) in 23S rRNA + S-adenosyl-L-homocysteine + H(+). Specifically methylates the cytosine at position 1962 (m5C1962) of 23S rRNA. The protein is Ribosomal RNA large subunit methyltransferase I of Alteromonas mediterranea (strain DSM 17117 / CIP 110805 / LMG 28347 / Deep ecotype).